We begin with the raw amino-acid sequence, 145 residues long: Cytochrome c550 (145 aa).

Residues 1–24 form the signal peptide; it reads MNKNNVLRGLLVLAGLSLSSLALA. The region spanning 60-142 is the Cytochrome c domain; it reads LAVEIGASAY…AIRSYLESVH (83 aa). Residues Cys-73, Cys-76, His-77, and Met-119 each coordinate heme c.

As to quaternary structure, monomer. Interacts with the quinoprotein ethanol dehydrogenase (QEDH) ExaA. Binds 1 heme group per subunit.

The protein resides in the periplasm. Its pathway is alcohol metabolism; ethanol degradation; acetate from ethanol. Is an essential component of the ethanol oxidation system that allows P.aeruginosa to grow on ethanol as the sole carbon and energy source. Is the direct electron acceptor of the quinoprotein ethanol dehydrogenase (QEDH). The polypeptide is Cytochrome c550 (Pseudomonas aeruginosa (strain ATCC 15692 / DSM 22644 / CIP 104116 / JCM 14847 / LMG 12228 / 1C / PRS 101 / PAO1)).